We begin with the raw amino-acid sequence, 297 residues long: Nucleotide-binding protein Bsph_0448 (297 aa).

19–26 (GMSGAGKT) contacts ATP. Residue 70–73 (DMRG) coordinates GTP.

It belongs to the RapZ-like family.

Displays ATPase and GTPase activities. The polypeptide is Nucleotide-binding protein Bsph_0448 (Lysinibacillus sphaericus (strain C3-41)).